A 180-amino-acid chain; its full sequence is Translation initiation factor IF-3 (180 aa).

It belongs to the IF-3 family. In terms of assembly, monomer.

It localises to the cytoplasm. Functionally, IF-3 binds to the 30S ribosomal subunit and shifts the equilibrium between 70S ribosomes and their 50S and 30S subunits in favor of the free subunits, thus enhancing the availability of 30S subunits on which protein synthesis initiation begins. The sequence is that of Translation initiation factor IF-3 from Hyphomonas neptunium (strain ATCC 15444).